A 715-amino-acid chain; its full sequence is Polyribonucleotide nucleotidyltransferase (715 aa).

2 residues coordinate Mg(2+): aspartate 495 and aspartate 501. The KH domain maps to 562–621 (PRLLTLQIPPDMIGLVIGPGGKTVRGISEQYNVKVDISEEGLVTITAPNETNAKQARAAI). In terms of domain architecture, S1 motif spans 631 to 699 (GDVYLGRVTR…SKGRINLTRL (69 aa)).

Belongs to the polyribonucleotide nucleotidyltransferase family. Mg(2+) is required as a cofactor.

The protein resides in the cytoplasm. The catalysed reaction is RNA(n+1) + phosphate = RNA(n) + a ribonucleoside 5'-diphosphate. Involved in mRNA degradation. Catalyzes the phosphorolysis of single-stranded polyribonucleotides processively in the 3'- to 5'-direction. This Thermosynechococcus vestitus (strain NIES-2133 / IAM M-273 / BP-1) protein is Polyribonucleotide nucleotidyltransferase.